We begin with the raw amino-acid sequence, 152 residues long: 3-dehydroquinate dehydratase (152 aa).

Catalysis depends on Tyr26, which acts as the Proton acceptor. Asn77, His83, and Asp90 together coordinate substrate. The Proton donor role is filled by His103. Substrate is bound by residues 104 to 105 and Arg114; that span reads LS.

The protein belongs to the type-II 3-dehydroquinase family. As to quaternary structure, homododecamer.

It carries out the reaction 3-dehydroquinate = 3-dehydroshikimate + H2O. Its pathway is metabolic intermediate biosynthesis; chorismate biosynthesis; chorismate from D-erythrose 4-phosphate and phosphoenolpyruvate: step 3/7. In terms of biological role, catalyzes a trans-dehydration via an enolate intermediate. The sequence is that of 3-dehydroquinate dehydratase (aroQ) from Synechocystis sp. (strain ATCC 27184 / PCC 6803 / Kazusa).